The primary structure comprises 204 residues: Outer-membrane lipoprotein carrier protein (204 aa).

A signal peptide spans 1–21; sequence MKKYLNLTALLLVGISNVTWA.

It belongs to the LolA family. As to quaternary structure, monomer.

It is found in the periplasm. Participates in the translocation of lipoproteins from the inner membrane to the outer membrane. Only forms a complex with a lipoprotein if the residue after the N-terminal Cys is not an aspartate (The Asp acts as a targeting signal to indicate that the lipoprotein should stay in the inner membrane). The sequence is that of Outer-membrane lipoprotein carrier protein from Histophilus somni (strain 129Pt) (Haemophilus somnus).